The primary structure comprises 353 residues: Chorismate synthase (353 aa).

R48 is a binding site for NADP(+). Residues 128–130, G280, 295–299, and R321 contribute to the FMN site; these read RAS and KPIPS.

It belongs to the chorismate synthase family. In terms of assembly, homotetramer. It depends on FMNH2 as a cofactor.

The enzyme catalyses 5-O-(1-carboxyvinyl)-3-phosphoshikimate = chorismate + phosphate. It participates in metabolic intermediate biosynthesis; chorismate biosynthesis; chorismate from D-erythrose 4-phosphate and phosphoenolpyruvate: step 7/7. Functionally, catalyzes the anti-1,4-elimination of the C-3 phosphate and the C-6 proR hydrogen from 5-enolpyruvylshikimate-3-phosphate (EPSP) to yield chorismate, which is the branch point compound that serves as the starting substrate for the three terminal pathways of aromatic amino acid biosynthesis. This reaction introduces a second double bond into the aromatic ring system. In Nitratidesulfovibrio vulgaris (strain DSM 19637 / Miyazaki F) (Desulfovibrio vulgaris), this protein is Chorismate synthase.